The sequence spans 849 residues: Aminopeptidase N (849 aa).

Residues glutamate 122 and 259–263 (GAMEN) each bind substrate. Histidine 294 contacts Zn(2+). The Proton acceptor role is filled by glutamate 295. Residues histidine 298 and glutamate 317 each contribute to the Zn(2+) site.

Belongs to the peptidase M1 family. In terms of assembly, monomer. Requires Zn(2+) as cofactor.

The protein resides in the cytoplasm. The enzyme catalyses Release of an N-terminal amino acid, Xaa-|-Yaa- from a peptide, amide or arylamide. Xaa is preferably Ala, but may be most amino acids including Pro (slow action). When a terminal hydrophobic residue is followed by a prolyl residue, the two may be released as an intact Xaa-Pro dipeptide.. Functionally, aminopeptidase with broad substrate specificity to several peptides. It has more affinity for oligopeptides than for dipeptides. It plays an essential role in the metabolism, it may be involved in nitrogen supply or protein turnover. This is Aminopeptidase N (pepN) from Lactococcus lactis subsp. lactis (Streptococcus lactis).